The primary structure comprises 500 residues: Glycerol kinase (500 aa).

Thr14 lines the ADP pocket. 3 residues coordinate ATP: Thr14, Thr15, and Ser16. Sn-glycerol 3-phosphate is bound at residue Thr14. An ADP-binding site is contributed by Arg18. The sn-glycerol 3-phosphate site is built by Arg84, Glu85, and Tyr136. Glycerol contacts are provided by Arg84, Glu85, and Tyr136. At His232 the chain carries Phosphohistidine; by HPr. Asp246 provides a ligand contact to sn-glycerol 3-phosphate. The glycerol site is built by Asp246 and Gln247. ADP-binding residues include Thr268 and Gly311. The ATP site is built by Thr268, Gly311, Gln315, and Gly412. ADP is bound by residues Gly412 and Asn416.

This sequence belongs to the FGGY kinase family. Homotetramer and homodimer (in equilibrium). The phosphoenolpyruvate-dependent sugar phosphotransferase system (PTS), including enzyme I, and histidine-containing protein (HPr) are required for the phosphorylation, which leads to the activation of the enzyme.

The enzyme catalyses glycerol + ATP = sn-glycerol 3-phosphate + ADP + H(+). Its pathway is polyol metabolism; glycerol degradation via glycerol kinase pathway; sn-glycerol 3-phosphate from glycerol: step 1/1. With respect to regulation, activated by phosphorylation and inhibited by fructose 1,6-bisphosphate (FBP). Its function is as follows. Key enzyme in the regulation of glycerol uptake and metabolism. Catalyzes the phosphorylation of glycerol to yield sn-glycerol 3-phosphate. This Streptococcus uberis (strain ATCC BAA-854 / 0140J) protein is Glycerol kinase.